A 204-amino-acid polypeptide reads, in one-letter code: LexA repressor (204 aa).

Residues 28 to 48 (RAEIAQELGFKSPNAAEEHLK) constitute a DNA-binding region (H-T-H motif). Active-site for autocatalytic cleavage activity residues include Ser125 and Lys162.

This sequence belongs to the peptidase S24 family. As to quaternary structure, homodimer.

It carries out the reaction Hydrolysis of Ala-|-Gly bond in repressor LexA.. Functionally, represses a number of genes involved in the response to DNA damage (SOS response), including recA and lexA. In the presence of single-stranded DNA, RecA interacts with LexA causing an autocatalytic cleavage which disrupts the DNA-binding part of LexA, leading to derepression of the SOS regulon and eventually DNA repair. This Ectopseudomonas mendocina (strain ymp) (Pseudomonas mendocina) protein is LexA repressor.